The following is a 397-amino-acid chain: Protein shisa-8 (397 aa).

Residues 1–38 form the signal peptide; it reads MARAGARGLLGGRRPPGLRLALALRLALLLARPPSGRA. Residues 39–138 are Extracellular-facing; sequence GAPEAQGPAA…APRDPGRERS (100 aa). Asparagine 75 carries an N-linked (GlcNAc...) asparagine glycan. The disordered stretch occupies residues 117–136; that stretch reads TGRPPARARDTAAPRDPGRE. Residues 123–136 are compositionally biased toward basic and acidic residues; that stretch reads RARDTAAPRDPGRE. The helical transmembrane segment at 139 to 159 threads the bilayer; the sequence is HTAVYAVCGVAALLVLAGIGA. The Cytoplasmic segment spans residues 160–397; sequence RLGLERAHSP…RTNSKTEVTV (238 aa). 2 disordered regions span residues 182-250 and 281-303; these read LLKQ…GGSL and FPALEPSPRQPPARAPRPSPDLP. 2 stretches are compositionally biased toward pro residues: residues 188–197 and 288–303; these read PQEPLPPTLG and PRQPPARAPRPSPDLP.

It belongs to the shisa family. As to quaternary structure, interacts with AMPAR subunits GRIA1 and GRIA2.

The protein localises to the membrane. In terms of biological role, may regulate trafficking and current kinetics of AMPA-type glutamate receptor (AMPAR) at synapses. In Homo sapiens (Human), this protein is Protein shisa-8.